The following is a 283-amino-acid chain: Protein FAM78A (283 aa).

This sequence belongs to the FAM78 family.

This Mus musculus (Mouse) protein is Protein FAM78A (Fam78a).